Reading from the N-terminus, the 163-residue chain is Nucleotide-binding protein cbdbA1256 (163 aa).

Belongs to the YajQ family.

Nucleotide-binding protein. The sequence is that of Nucleotide-binding protein cbdbA1256 from Dehalococcoides mccartyi (strain CBDB1).